A 352-amino-acid polypeptide reads, in one-letter code: Quinolinate synthase (352 aa).

Iminosuccinate-binding residues include histidine 48 and serine 69. Cysteine 114 contacts [4Fe-4S] cluster. Iminosuccinate contacts are provided by residues 140 to 142 and serine 157; that span reads YAN. Residue cysteine 201 participates in [4Fe-4S] cluster binding. Iminosuccinate is bound by residues 227–229 and threonine 244; that span reads HPE. Cysteine 298 lines the [4Fe-4S] cluster pocket.

Belongs to the quinolinate synthase family. Type 1 subfamily. [4Fe-4S] cluster is required as a cofactor.

The protein localises to the cytoplasm. The catalysed reaction is iminosuccinate + dihydroxyacetone phosphate = quinolinate + phosphate + 2 H2O + H(+). It participates in cofactor biosynthesis; NAD(+) biosynthesis; quinolinate from iminoaspartate: step 1/1. Catalyzes the condensation of iminoaspartate with dihydroxyacetone phosphate to form quinolinate. The chain is Quinolinate synthase from Pseudomonas fluorescens (strain Pf0-1).